We begin with the raw amino-acid sequence, 278 residues long: Hydroxyethylthiazole kinase (278 aa).

Met51 contributes to the substrate binding site. ATP-binding residues include Arg127 and Ser173. Residue Gly201 coordinates substrate.

It belongs to the Thz kinase family. The cofactor is Mg(2+).

The enzyme catalyses 5-(2-hydroxyethyl)-4-methylthiazole + ATP = 4-methyl-5-(2-phosphooxyethyl)-thiazole + ADP + H(+). The protein operates within cofactor biosynthesis; thiamine diphosphate biosynthesis; 4-methyl-5-(2-phosphoethyl)-thiazole from 5-(2-hydroxyethyl)-4-methylthiazole: step 1/1. In terms of biological role, catalyzes the phosphorylation of the hydroxyl group of 4-methyl-5-beta-hydroxyethylthiazole (THZ). This Leptothrix cholodnii (strain ATCC 51168 / LMG 8142 / SP-6) (Leptothrix discophora (strain SP-6)) protein is Hydroxyethylthiazole kinase.